Consider the following 63-residue polypeptide: Large ribosomal subunit protein uL29 (63 aa).

Belongs to the universal ribosomal protein uL29 family.

The protein is Large ribosomal subunit protein uL29 of Marinomonas sp. (strain MWYL1).